The following is an 83-amino-acid chain: Large ribosomal subunit protein eL14 (83 aa).

Belongs to the eukaryotic ribosomal protein eL14 family.

This is Large ribosomal subunit protein eL14 from Thermococcus gammatolerans (strain DSM 15229 / JCM 11827 / EJ3).